The following is a 202-amino-acid chain: Small ribosomal subunit protein uS4c-1 (202 aa).

One can recognise an S4 RNA-binding domain in the interval 90-152; it reads MRLDNIVLRA…NKSRQLIDLN (63 aa).

Belongs to the universal ribosomal protein uS4 family. Part of the 30S ribosomal subunit. Contacts protein S5. The interaction surface between S4 and S5 is involved in control of translational fidelity.

The protein resides in the plastid. It localises to the chloroplast. Functionally, one of the primary rRNA binding proteins, it binds directly to 16S rRNA where it nucleates assembly of the body of the 30S subunit. With S5 and S12 plays an important role in translational accuracy. This Cyanidium caldarium (Red alga) protein is Small ribosomal subunit protein uS4c-1.